A 360-amino-acid chain; its full sequence is Archaemetzincin-2 (360 aa).

H254 provides a ligand contact to Zn(2+). E255 (proton acceptor) is an active-site residue. Positions 258, 264, 265, 270, 289, and 292 each coordinate Zn(2+).

It belongs to the peptidase M54 family. The cofactor is Zn(2+).

Its function is as follows. Probable zinc metalloprotease. This Pongo abelii (Sumatran orangutan) protein is Archaemetzincin-2 (AMZ2).